Consider the following 142-residue polypeptide: Acidic phospholipase A2 PA4 (142 aa).

3 residues coordinate Ca(2+): Trp10, Gly12, and Gly14. 3 disulfides stabilise this stretch: Cys11–Cys33, Cys32–Cys72, and Cys39–Cys65. The active site involves His36. Residue Asp37 coordinates Ca(2+).

The protein belongs to the phospholipase A2 family. Group III subfamily. It depends on Ca(2+) as a cofactor. As to expression, expressed by the venom gland.

The protein resides in the secreted. It carries out the reaction a 1,2-diacyl-sn-glycero-3-phosphocholine + H2O = a 1-acyl-sn-glycero-3-phosphocholine + a fatty acid + H(+). Its function is as follows. PLA2 catalyzes the calcium-dependent hydrolysis of the 2-acyl groups in 3-sn-phosphoglycerides. The polypeptide is Acidic phospholipase A2 PA4 (Heloderma suspectum (Gila monster)).